The following is a 159-amino-acid chain: Large ribosomal subunit protein uL15 (159 aa).

A disordered region spans residues 1–39 (MKLNELSPADGSTKKRMRVGRGVGSGKGKTAGRGVKGQN). The span at 21–35 (RGVGSGKGKTAGRGV) shows a compositional bias: gly residues.

It belongs to the universal ribosomal protein uL15 family. Part of the 50S ribosomal subunit.

Functionally, binds to the 23S rRNA. The sequence is that of Large ribosomal subunit protein uL15 from Hyphomonas neptunium (strain ATCC 15444).